The following is a 575-amino-acid chain: Thrombomodulin (575 aa).

The first 18 residues, 1-18 (MLGVLVLGALALAGLGFP), serve as a signal peptide directing secretion. The Extracellular segment spans residues 19–515 (APAEPQPGGS…TPPAVGLVHS (497 aa)). Residues 31 to 169 (VEHDCFALYP…VKADGFLCEF (139 aa)) enclose the C-type lectin domain. Residues asparagine 47, asparagine 115, and asparagine 116 are each glycosylated (N-linked (GlcNAc...) asparagine). 19 cysteine pairs are disulfide-bonded: cysteine 137–cysteine 158, cysteine 245–cysteine 256, cysteine 252–cysteine 265, cysteine 267–cysteine 280, cysteine 288–cysteine 296, cysteine 292–cysteine 308, cysteine 310–cysteine 323, cysteine 329–cysteine 340, cysteine 336–cysteine 349, cysteine 351–cysteine 362, cysteine 369–cysteine 378, cysteine 374–cysteine 388, cysteine 390–cysteine 404, cysteine 408–cysteine 413, cysteine 417–cysteine 425, cysteine 427–cysteine 439, cysteine 445–cysteine 455, cysteine 451–cysteine 464, and cysteine 466–cysteine 480. 2 consecutive EGF-like domains span residues 241-281 (GAWD…RSCT) and 284-324 (ATQS…HRCE). The EGF-like 3; calcium-binding domain occupies 325 to 363 (DVDDCILEPSPCPQRCVNTQGGFECHCYPNYDLVDGECV). Residue asparagine 342 is modified to (3R)-3-hydroxyasparagine. EGF-like domains lie at 365-405 (PVDP…HRCQ) and 404-440 (CQMFCNQTACPADCDPNTQASCECPEGYILDDGFICT). Residue asparagine 382 is glycosylated (N-linked (GlcNAc...) asparagine). Asparagine 409 carries N-linked (GlcNAc...) asparagine glycosylation. The EGF-like 6; calcium-binding domain maps to 441 to 481 (DIDECENGGFCSGVCHNLPGTFECICGPDSALARHIGTDCD). The interval 481-515 (DSGKVDGGDSGSGEPPPSPTPGSTLTPPAVGLVHS) is involved in alpha-L/beta-2 and alpha-M/beta-2 integrin binding. Residues 484–506 (KVDGGDSGSGEPPPSPTPGSTLT) form a disordered region. 2 O-linked (Xyl...) (chondroitin sulfate) serine glycosylation sites follow: serine 490 and serine 492. A helical membrane pass occupies residues 516–539 (GLLIGISIASLCLVVALLALLCHL). Topologically, residues 540 to 575 (RKKQGAARAKMEYKCAAPSKEVVLQHVRTERTPQRL) are cytoplasmic.

Interacts with ITGAL, ITGAM and ITGB2. Interacts with thrombin/F2; this interaction switches the specificity of thrombin from a procoagulant to an anticoagulant and antifibrinolytic protease. Interacts with ANGP1 and ANGP2; these interactions significantly inhibit the generation of activated PC and TAFIa/CPB2 by the thrombin/thrombomodulin complex. Interacts with PF4; this interaction enhances generation of activated protein C. Interacts with HMGB1; this interaction inhibits HMGB1 inflammatory activity. Post-translationally, N-glycosylated. In terms of processing, the iron and 2-oxoglutarate dependent 3-hydroxylation of aspartate and asparagine is (R) stereospecific within EGF domains. As to expression, endothelial cells are unique in synthesizing thrombomodulin.

The protein localises to the membrane. Its function is as follows. Endothelial cell receptor that plays a critical role in regulating several physiological processes including hemostasis, coagulation, fibrinolysis, inflammation, and angiogenesis. Acts as a cofactor for thrombin activation of protein C/PROC on the surface of vascular endothelial cells leading to initiation of the activated protein C anticoagulant pathway. Also accelerates the activation of the plasma carboxypeptidase B2/CPB2, which catalyzes removal of C-terminal basic amino acids from its substrates including kinins or anaphylatoxins leading to fibrinolysis inhibition. Plays critical protective roles in changing the cleavage specificity of protease-activated receptor 1/PAR1, inhibiting endothelial cell permeability and inflammation. Suppresses inflammation distinctly from its anticoagulant cofactor activity by sequestering HMGB1 thereby preventing it from engaging cellular receptors such as RAGE and contributing to the inflammatory response. The chain is Thrombomodulin (THBD) from Homo sapiens (Human).